A 151-amino-acid chain; its full sequence is 3-hydroxyacyl-[acyl-carrier-protein] dehydratase FabZ (151 aa).

The active site involves H54.

Belongs to the thioester dehydratase family. FabZ subfamily. In terms of assembly, oligomer. In terms of processing, the N-terminus is blocked.

It is found in the cytoplasm. It carries out the reaction a (3R)-hydroxyacyl-[ACP] = a (2E)-enoyl-[ACP] + H2O. Its function is as follows. Involved in unsaturated fatty acids biosynthesis. Catalyzes the dehydration of short chain beta-hydroxyacyl-ACPs and long chain saturated and unsaturated beta-hydroxyacyl-ACPs. The protein is 3-hydroxyacyl-[acyl-carrier-protein] dehydratase FabZ of Escherichia coli (strain SE11).